A 179-amino-acid polypeptide reads, in one-letter code: tRNA-splicing endonuclease (179 aa).

Residues Tyr115, His125, and Lys156 contribute to the active site.

The protein belongs to the tRNA-intron endonuclease family. Archaeal short subfamily. In terms of assembly, homotetramer; although the tetramer contains four active sites, only two participate in the cleavage. Therefore, it should be considered as a dimer of dimers.

The enzyme catalyses pretRNA = a 3'-half-tRNA molecule with a 5'-OH end + a 5'-half-tRNA molecule with a 2',3'-cyclic phosphate end + an intron with a 2',3'-cyclic phosphate and a 5'-hydroxyl terminus.. In terms of biological role, endonuclease that removes tRNA introns. Cleaves pre-tRNA at the 5'- and 3'-splice sites to release the intron. The products are an intron and two tRNA half-molecules bearing 2',3' cyclic phosphate and 5'-OH termini. Recognizes a pseudosymmetric substrate in which 2 bulged loops of 3 bases are separated by a stem of 4 bp. The protein is tRNA-splicing endonuclease (endA) of Methanocaldococcus jannaschii (strain ATCC 43067 / DSM 2661 / JAL-1 / JCM 10045 / NBRC 100440) (Methanococcus jannaschii).